Consider the following 288-residue polypeptide: Lysosomal thioesterase PPT2 homolog (288 aa).

Positions 1 to 22 (MRLRLQVLVALLTCSSISVSLA) are cleaved as a signal peptide. Catalysis depends on serine 98, which acts as the Nucleophile. N-linked (GlcNAc...) asparagine glycosylation is present at asparagine 192. Residues aspartate 214 and histidine 269 contribute to the active site.

It belongs to the palmitoyl-protein thioesterase family. Expressed in adult head and crop.

The protein resides in the lysosome. It carries out the reaction hexadecanoyl-CoA + H2O = hexadecanoate + CoA + H(+). The enzyme catalyses S-hexadecanoyl-N-acetylcysteamine + H2O = N-acetylcysteamine + hexadecanoate + H(+). Its function is as follows. Catalyzes the cleavage of thioester bonds from S-palmitoyl-CoA or S-palmitoyl-N-acetylcysteamine (unbranched structures) but does not have activity against palmitoylcysteine or palmitoylated proteins, branched structures or bulky head groups. Conversely, hydrolyzes both long and short chain fatty acyl-CoA substrate. The polypeptide is Lysosomal thioesterase PPT2 homolog (Ppt2) (Drosophila melanogaster (Fruit fly)).